We begin with the raw amino-acid sequence, 352 residues long: UDP-N-acetylglucosamine--N-acetylmuramyl-(pentapeptide) pyrophosphoryl-undecaprenol N-acetylglucosamine transferase (352 aa).

UDP-N-acetyl-alpha-D-glucosamine is bound by residues serine 195 and glutamine 287.

This sequence belongs to the glycosyltransferase 28 family. MurG subfamily.

It localises to the cell membrane. The catalysed reaction is Mur2Ac(oyl-L-Ala-gamma-D-Glu-L-Lys-D-Ala-D-Ala)-di-trans,octa-cis-undecaprenyl diphosphate + UDP-N-acetyl-alpha-D-glucosamine = beta-D-GlcNAc-(1-&gt;4)-Mur2Ac(oyl-L-Ala-gamma-D-Glu-L-Lys-D-Ala-D-Ala)-di-trans,octa-cis-undecaprenyl diphosphate + UDP + H(+). Its pathway is cell wall biogenesis; peptidoglycan biosynthesis. Cell wall formation. Catalyzes the transfer of a GlcNAc subunit on undecaprenyl-pyrophosphoryl-MurNAc-pentapeptide (lipid intermediate I) to form undecaprenyl-pyrophosphoryl-MurNAc-(pentapeptide)GlcNAc (lipid intermediate II). In Streptococcus pneumoniae (strain Taiwan19F-14), this protein is UDP-N-acetylglucosamine--N-acetylmuramyl-(pentapeptide) pyrophosphoryl-undecaprenol N-acetylglucosamine transferase.